The primary structure comprises 101 residues: Urease subunit beta (101 aa).

It belongs to the urease beta subunit family. Heterotrimer of UreA (gamma), UreB (beta) and UreC (alpha) subunits. Three heterotrimers associate to form the active enzyme.

Its subcellular location is the cytoplasm. It catalyses the reaction urea + 2 H2O + H(+) = hydrogencarbonate + 2 NH4(+). The protein operates within nitrogen metabolism; urea degradation; CO(2) and NH(3) from urea (urease route): step 1/1. This chain is Urease subunit beta, found in Cereibacter sphaeroides (strain ATCC 17025 / ATH 2.4.3) (Rhodobacter sphaeroides).